The sequence spans 163 residues: Small ribosomal subunit protein bS6 (163 aa).

Positions 97-163 (EEGQTAMLTN…GRNEGEGDRA (67 aa)) are disordered. Over residues 122-163 (RGPRRDFGDRGPRRDFGDRGPRRDGDGPRAEGGRNEGEGDRA) the composition is skewed to basic and acidic residues.

This sequence belongs to the bacterial ribosomal protein bS6 family.

Its function is as follows. Binds together with bS18 to 16S ribosomal RNA. The polypeptide is Small ribosomal subunit protein bS6 (Rhodospirillum centenum (strain ATCC 51521 / SW)).